We begin with the raw amino-acid sequence, 606 residues long: Phosphomethylpyrimidine synthase (606 aa).

Polar residues predominate over residues 1 to 13; it reads MTTADARTPASKQ. Disordered regions lie at residues 1–49 and 105–147; these read MTTA…SRPD and AGRP…DGRP. Positions 14–31 are enriched in low complexity; it reads NDGTPDGTTPDAGTPNDG. Residues 105-117 show a composition bias toward basic and acidic residues; the sequence is AGRPVRPEDDGLK. Substrate is bound by residues Asn-213, Met-242, Tyr-271, His-307, 327–329, 368–371, and Glu-407; these read SRG and DGLR. His-411 serves as a coordination point for Zn(2+). A substrate-binding site is contributed by Tyr-434. Position 475 (His-475) interacts with Zn(2+). Positions 555, 558, and 563 each coordinate [4Fe-4S] cluster.

This sequence belongs to the ThiC family. The cofactor is [4Fe-4S] cluster.

It catalyses the reaction 5-amino-1-(5-phospho-beta-D-ribosyl)imidazole + S-adenosyl-L-methionine = 4-amino-2-methyl-5-(phosphooxymethyl)pyrimidine + CO + 5'-deoxyadenosine + formate + L-methionine + 3 H(+). It functions in the pathway cofactor biosynthesis; thiamine diphosphate biosynthesis. Its function is as follows. Catalyzes the synthesis of the hydroxymethylpyrimidine phosphate (HMP-P) moiety of thiamine from aminoimidazole ribotide (AIR) in a radical S-adenosyl-L-methionine (SAM)-dependent reaction. The sequence is that of Phosphomethylpyrimidine synthase from Streptomyces griseus subsp. griseus (strain JCM 4626 / CBS 651.72 / NBRC 13350 / KCC S-0626 / ISP 5235).